A 220-amino-acid chain; its full sequence is Cytidylate kinase (220 aa).

Residue Gly-9–Thr-17 coordinates ATP.

This sequence belongs to the cytidylate kinase family. Type 1 subfamily.

Its subcellular location is the cytoplasm. It catalyses the reaction CMP + ATP = CDP + ADP. It carries out the reaction dCMP + ATP = dCDP + ADP. In Thermotoga neapolitana (strain ATCC 49049 / DSM 4359 / NBRC 107923 / NS-E), this protein is Cytidylate kinase.